Here is a 105-residue protein sequence, read N- to C-terminus: Large ribosomal subunit protein uL24 (105 aa).

Belongs to the universal ribosomal protein uL24 family. In terms of assembly, part of the 50S ribosomal subunit.

In terms of biological role, one of two assembly initiator proteins, it binds directly to the 5'-end of the 23S rRNA, where it nucleates assembly of the 50S subunit. Functionally, one of the proteins that surrounds the polypeptide exit tunnel on the outside of the subunit. This Dictyoglomus thermophilum (strain ATCC 35947 / DSM 3960 / H-6-12) protein is Large ribosomal subunit protein uL24.